The following is a 537-amino-acid chain: CTP synthase (537 aa).

The interval 1–265 (MTKFIFVTGG…GKYLVKRLGL (265 aa)) is amidoligase domain. S13 provides a ligand contact to CTP. Position 13 (S13) interacts with UTP. Position 14–19 (14–19 (GLGKGI)) interacts with ATP. Y54 contributes to the L-glutamine binding site. D71 serves as a coordination point for ATP. D71 and E139 together coordinate Mg(2+). CTP-binding positions include 146 to 148 (DIE), 186 to 191 (KTKPTQ), and K222. UTP is bound by residues 186–191 (KTKPTQ) and K222. The region spanning 290–532 (EIAIVGKYVK…VKAAKEYKQE (243 aa)) is the Glutamine amidotransferase type-1 domain. G351 contacts L-glutamine. The Nucleophile; for glutamine hydrolysis role is filled by C378. L-glutamine is bound by residues 379–382 (FGFQ), E402, and R459. Catalysis depends on residues H505 and E507.

This sequence belongs to the CTP synthase family. As to quaternary structure, homotetramer.

It carries out the reaction UTP + L-glutamine + ATP + H2O = CTP + L-glutamate + ADP + phosphate + 2 H(+). It catalyses the reaction L-glutamine + H2O = L-glutamate + NH4(+). The catalysed reaction is UTP + NH4(+) + ATP = CTP + ADP + phosphate + 2 H(+). It functions in the pathway pyrimidine metabolism; CTP biosynthesis via de novo pathway; CTP from UDP: step 2/2. Its activity is regulated as follows. Allosterically activated by GTP, when glutamine is the substrate; GTP has no effect on the reaction when ammonia is the substrate. The allosteric effector GTP functions by stabilizing the protein conformation that binds the tetrahedral intermediate(s) formed during glutamine hydrolysis. Inhibited by the product CTP, via allosteric rather than competitive inhibition. Catalyzes the ATP-dependent amination of UTP to CTP with either L-glutamine or ammonia as the source of nitrogen. Regulates intracellular CTP levels through interactions with the four ribonucleotide triphosphates. The polypeptide is CTP synthase (Pyrococcus abyssi (strain GE5 / Orsay)).